Consider the following 206-residue polypeptide: SOSS complex subunit B2 (206 aa).

The segment at residues 26–89 is a DNA-binding region (OB); that stretch reads IVLEIGRVTK…SMWKGCLTLY (64 aa). 2 disordered regions span residues 114-146 and 166-206; these read EPNP…GTGT and SYAG…AFKR. Over residues 181 to 196 the composition is skewed to polar residues; that stretch reads LPGTANNQTVMTTISN.

The protein belongs to the SOSS-B family. SOSS-B2 subfamily. As to quaternary structure, component of the SOSS complex, composed of SOSS-B (SOSS-B1/NABP2 or SOSS-B2/NABP1), SOSS-A/INTS3 and SOSS-C/INIP. SOSS complexes containing SOSS-B1/NABP2 are more abundant than complexes containing SOSS-B2/NABP1.

It is found in the nucleus. Functionally, component of the SOSS complex, a multiprotein complex that functions downstream of the MRN complex to promote DNA repair and G2/M checkpoint. In the SOSS complex, acts as a sensor of single-stranded DNA that binds to single-stranded DNA, in particular to polypyrimidines. The SOSS complex associates with DNA lesions and influences diverse endpoints in the cellular DNA damage response including cell-cycle checkpoint activation, recombinational repair and maintenance of genomic stability. Required for efficient homologous recombination-dependent repair of double-strand breaks (DSBs) and ATM-dependent signaling pathways. The polypeptide is SOSS complex subunit B2 (NABP1) (Bos taurus (Bovine)).